Consider the following 110-residue polypeptide: Cytochrome c oxidase subunit 4B (110 aa).

Transmembrane regions (helical) follow at residues 27–47, 50–70, and 88–108; these read YQVL…LTVA, GVGS…QVIF, and LFLY…VTII.

The protein belongs to the cytochrome c oxidase bacterial subunit 4 family.

It is found in the cell membrane. The enzyme catalyses 4 Fe(II)-[cytochrome c] + O2 + 8 H(+)(in) = 4 Fe(III)-[cytochrome c] + 2 H2O + 4 H(+)(out). The chain is Cytochrome c oxidase subunit 4B (ctaF) from Bacillus subtilis (strain 168).